The chain runs to 230 residues: Protein FAM3A (230 aa).

The signal sequence occupies residues 1-33; that stretch reads MRLAGPLRIVALVVSVGLTWIVVSILLGGPGSG. 2 cysteine pairs are disulfide-bonded: Cys59/Cys87 and Cys65/Cys222. In terms of domain architecture, GG-type lectin spans 68 to 226; sequence EHLAFRVVSG…LEMEGCIPRR (159 aa).

This sequence belongs to the FAM3 family.

It localises to the secreted. This chain is Protein FAM3A (FAM3A), found in Pongo abelii (Sumatran orangutan).